A 159-amino-acid chain; its full sequence is 6,7-dimethyl-8-ribityllumazine synthase (159 aa).

5-amino-6-(D-ribitylamino)uracil is bound by residues Trp28, 59–61 (ALE), and 81–83 (CVI). 86-87 (GT) contributes to the (2S)-2-hydroxy-3-oxobutyl phosphate binding site. The active-site Proton donor is the His89. Asn114 contributes to the 5-amino-6-(D-ribitylamino)uracil binding site. Arg128 is a binding site for (2S)-2-hydroxy-3-oxobutyl phosphate.

The protein belongs to the DMRL synthase family.

The catalysed reaction is (2S)-2-hydroxy-3-oxobutyl phosphate + 5-amino-6-(D-ribitylamino)uracil = 6,7-dimethyl-8-(1-D-ribityl)lumazine + phosphate + 2 H2O + H(+). Its pathway is cofactor biosynthesis; riboflavin biosynthesis; riboflavin from 2-hydroxy-3-oxobutyl phosphate and 5-amino-6-(D-ribitylamino)uracil: step 1/2. Functionally, catalyzes the formation of 6,7-dimethyl-8-ribityllumazine by condensation of 5-amino-6-(D-ribitylamino)uracil with 3,4-dihydroxy-2-butanone 4-phosphate. This is the penultimate step in the biosynthesis of riboflavin. The protein is 6,7-dimethyl-8-ribityllumazine synthase of Corynebacterium kroppenstedtii (strain DSM 44385 / JCM 11950 / CIP 105744 / CCUG 35717).